We begin with the raw amino-acid sequence, 53 residues long: Photosystem II reaction center protein K (53 aa).

A propeptide spanning residues 1-16 is cleaved from the precursor; it reads MLKFYLENVFHLIFFA. The chain crosses the membrane as a helical span at residues 28–48; sequence IVNVMPIIPLFFFLLAFVWQA.

It belongs to the PsbK family. In terms of assembly, PSII is composed of 1 copy each of membrane proteins PsbA, PsbB, PsbC, PsbD, PsbE, PsbF, PsbH, PsbI, PsbJ, PsbK, PsbL, PsbM, PsbT, PsbX, PsbY, PsbZ, Psb30/Ycf12, at least 3 peripheral proteins of the oxygen-evolving complex and a large number of cofactors. It forms dimeric complexes.

The protein localises to the plastid. The protein resides in the chloroplast thylakoid membrane. Functionally, one of the components of the core complex of photosystem II (PSII). PSII is a light-driven water:plastoquinone oxidoreductase that uses light energy to abstract electrons from H(2)O, generating O(2) and a proton gradient subsequently used for ATP formation. It consists of a core antenna complex that captures photons, and an electron transfer chain that converts photonic excitation into a charge separation. This chain is Photosystem II reaction center protein K, found in Huperzia lucidula (Shining clubmoss).